The chain runs to 119 residues: Large ribosomal subunit protein uL18 (119 aa).

Residues 1–10 (MKKIKEAEQR) show a composition bias toward basic and acidic residues. The disordered stretch occupies residues 1–20 (MKKIKEAEQRKLRRKKRIKD).

This sequence belongs to the universal ribosomal protein uL18 family. As to quaternary structure, part of the 50S ribosomal subunit; part of the 5S rRNA/L5/L18/L25 subcomplex. Contacts the 5S and 23S rRNAs.

In terms of biological role, this is one of the proteins that bind and probably mediate the attachment of the 5S RNA into the large ribosomal subunit, where it forms part of the central protuberance. The sequence is that of Large ribosomal subunit protein uL18 from Borreliella burgdorferi (strain ATCC 35210 / DSM 4680 / CIP 102532 / B31) (Borrelia burgdorferi).